We begin with the raw amino-acid sequence, 613 residues long: Dihydroxy-acid dehydratase (613 aa).

Residue aspartate 81 coordinates Mg(2+). Cysteine 122 is a binding site for [2Fe-2S] cluster. 2 residues coordinate Mg(2+): aspartate 123 and lysine 124. Lysine 124 bears the N6-carboxylysine mark. Cysteine 195 contributes to the [2Fe-2S] cluster binding site. Residue glutamate 491 coordinates Mg(2+). The active-site Proton acceptor is the serine 517.

The protein belongs to the IlvD/Edd family. As to quaternary structure, homodimer. [2Fe-2S] cluster serves as cofactor. Mg(2+) is required as a cofactor.

It catalyses the reaction (2R)-2,3-dihydroxy-3-methylbutanoate = 3-methyl-2-oxobutanoate + H2O. The catalysed reaction is (2R,3R)-2,3-dihydroxy-3-methylpentanoate = (S)-3-methyl-2-oxopentanoate + H2O. The protein operates within amino-acid biosynthesis; L-isoleucine biosynthesis; L-isoleucine from 2-oxobutanoate: step 3/4. It functions in the pathway amino-acid biosynthesis; L-valine biosynthesis; L-valine from pyruvate: step 3/4. Functionally, functions in the biosynthesis of branched-chain amino acids. Catalyzes the dehydration of (2R,3R)-2,3-dihydroxy-3-methylpentanoate (2,3-dihydroxy-3-methylvalerate) into 2-oxo-3-methylpentanoate (2-oxo-3-methylvalerate) and of (2R)-2,3-dihydroxy-3-methylbutanoate (2,3-dihydroxyisovalerate) into 2-oxo-3-methylbutanoate (2-oxoisovalerate), the penultimate precursor to L-isoleucine and L-valine, respectively. This chain is Dihydroxy-acid dehydratase, found in Aliivibrio fischeri (strain ATCC 700601 / ES114) (Vibrio fischeri).